Consider the following 331-residue polypeptide: Vacuolar protein sorting-associated protein 26B (331 aa).

The tract at residues 310 to 331 (AAQRYEGSNPEPTSAQAKEETD) is disordered.

This sequence belongs to the VPS26 family. In terms of assembly, component of the heterotrimeric retromer cargo-selective complex (CSC) which is believed to associate with variable sorting nexins to form functionally distinct retromer complex variants.

It is found in the cytoplasm. It localises to the membrane. The protein localises to the endosome. Functionally, acts as a component of the retromer cargo-selective complex (CSC). The CSC is believed to be the core functional component of retromer or respective retromer complex variants acting to prevent missorting of selected transmembrane cargo proteins into the lysosomal degradation pathway. Retromer mediates retrograde transport of cargo proteins from endosomes to the trans-Golgi network (TGN). In Danio rerio (Zebrafish), this protein is Vacuolar protein sorting-associated protein 26B (vps26b).